The sequence spans 200 residues: MSYYDPQGVIPYVIEQSPRGERAMDIYSRLLKDRIIFLGTPVDDQVANAIMAQLLHLESEDPEQDINLYINSPGGSVSAGLAIYDTMQFVKPDIVTTALGMAASMGAFLLAAGTKGKRFALPNTRILLHQPAVGGLAGQASDVEIHARELIRTKRRLNEILSEHTGQPYDKIERDTDRDFIMGAEEAIEYGLIDDIVRHH.

The active-site Nucleophile is the Ser104. Residue His129 is part of the active site.

This sequence belongs to the peptidase S14 family. As to quaternary structure, fourteen ClpP subunits assemble into 2 heptameric rings which stack back to back to give a disk-like structure with a central cavity, resembling the structure of eukaryotic proteasomes.

It localises to the cytoplasm. It carries out the reaction Hydrolysis of proteins to small peptides in the presence of ATP and magnesium. alpha-casein is the usual test substrate. In the absence of ATP, only oligopeptides shorter than five residues are hydrolyzed (such as succinyl-Leu-Tyr-|-NHMec, and Leu-Tyr-Leu-|-Tyr-Trp, in which cleavage of the -Tyr-|-Leu- and -Tyr-|-Trp bonds also occurs).. Functionally, cleaves peptides in various proteins in a process that requires ATP hydrolysis. Has a chymotrypsin-like activity. Plays a major role in the degradation of misfolded proteins. In Rubrobacter xylanophilus (strain DSM 9941 / JCM 11954 / NBRC 16129 / PRD-1), this protein is ATP-dependent Clp protease proteolytic subunit.